The following is a 182-amino-acid chain: Small ribosomal subunit protein uS4c (182 aa).

A disordered region spans residues 8 to 36; sequence LGALPGLTSKRPGSGSDPKNKSRSGKRSQ. The S4 RNA-binding domain maps to 82–143; the sequence is MRLDNILFRL…KQRSKALIQN (62 aa).

This sequence belongs to the universal ribosomal protein uS4 family. As to quaternary structure, part of the 30S ribosomal subunit. Contacts protein S5. The interaction surface between S4 and S5 is involved in control of translational fidelity.

The protein resides in the plastid. It localises to the chloroplast. Functionally, one of the primary rRNA binding proteins, it binds directly to 16S rRNA where it nucleates assembly of the body of the 30S subunit. Its function is as follows. With S5 and S12 plays an important role in translational accuracy. In Dietes robinsoniana (Lord Howe wedding lily), this protein is Small ribosomal subunit protein uS4c (rps4).